We begin with the raw amino-acid sequence, 89 residues long: YcgL domain-containing protein Asuc_1390 (89 aa).

The YcgL domain maps to 1-85; it reads MLCAIYKSKK…KDDWLFTIEK (85 aa).

This is YcgL domain-containing protein Asuc_1390 from Actinobacillus succinogenes (strain ATCC 55618 / DSM 22257 / CCUG 43843 / 130Z).